A 379-amino-acid chain; its full sequence is MATQGQVITCKAAVAYEPNKPLVIEDVQVAPPQAGEVRIKILYTALCHTDAYTWSGKDPEGLFPCILGHEAAGIVESVGEGVTEVQAGDHVIPCYQAECRECKFCKSGKTNLCGKVRSATGVGIMMNDRKSRFSVNGKPIYHFMGTSTFSQYTVVHDVSVAKIDPTAPLDKVCLLGCGVPTGLGAVWNTAKVEPGSNVAIFGLGTVGLAVAEGAKTAGASRIIGIDIDSKKYETAKKFGVNEFVNPKDHDKPIQEVIVDLTDGGVDYSFECIGNVSVMRAALECCHKGWGTSVIVGVAASGQEISTRPFQLVTGRVWKGTAFGGFKSRTQVPWLVEKYMNKEIKVDEYITHNLTLGEINKAFDLLHEGTCLRCVLDTSK.

An N-acetylalanine modification is found at A2. Position 47 (C47) interacts with Zn(2+). Position 48 (H48) interacts with NAD(+). The an alcohol site is built by T49 and H69. Zn(2+)-binding residues include H69, E70, C99, C102, C105, C113, and C177. Residues 202–207, D226, K231, I272, 295–297, 320–322, and R372 each bind NAD(+); these read GLGTVG, VGV, and TAF.

This sequence belongs to the zinc-containing alcohol dehydrogenase family. Class-III subfamily. In terms of assembly, homodimer. Zn(2+) is required as a cofactor. As to expression, ubiquitous.

It localises to the cytoplasm. The enzyme catalyses a primary alcohol + NAD(+) = an aldehyde + NADH + H(+). The catalysed reaction is a secondary alcohol + NAD(+) = a ketone + NADH + H(+). It carries out the reaction S-(hydroxymethyl)glutathione + NADP(+) = S-formylglutathione + NADPH + H(+). It catalyses the reaction S-(hydroxymethyl)glutathione + NAD(+) = S-formylglutathione + NADH + H(+). The enzyme catalyses S-nitrosoglutathione + NADH + H(+) = S-(hydroxysulfenamide)glutathione + NAD(+). With respect to regulation, repressed by thiol-modifying agents N-ethylmaleimide (NEM) and 5,5-dithio-bis-(2-nitrobenzoic acid) (DTNB), as well as by methyl methanethiosulfonate (MMTS) in a dose-dependent manner. Inhibited by hydrogen peroxide H(2)O(2). Alcohol dehydrogenase catalyzing the reduction of nitrosoglutathione. Can also use long-chain alcohols including cinnamyl alcohol and geraniol, and, to a lower extent, octanol. Plays a central role in formaldehyde detoxification. Not able to use ethanol (EtOH) as substrate. The protein is Alcohol dehydrogenase class-3 of Arabidopsis thaliana (Mouse-ear cress).